The following is a 362-amino-acid chain: MLRLVVGALLLVLAFAGGYAVAACKTVTLTVDGTAMRVTTMKSRVIDIVEENGFSVDDRDDLYPAAGVQVHDADTIVLRRSRPLQISLDGHDAKQVWTTASTVDEALAQLAMTDTAPAAASRASRVPLSGMALPVVSAKTVQLNDGGLVRTVHLPAPNVAGLLSAAGVPLLQSDHVVPAATAPIVEGMQIQVTRNRIKKVTERLPLPPNARRVEDPEMNMSREVVEDPGVPGTQDVTFAVAEVNGVETGRLPVANVVVTPAHEAVVRVGTKPGTEVPPVIDGSIWDAIAGCEAGGNWAINTGNGYYGGVQFDQGTWEANGGLRYAPRADLATREEQIAVAEVTRLRQGWGAWPVCAARAGAR.

Residues 1 to 23 (MLRLVVGALLLVLAFAGGYAVAA) form the signal peptide. Residue Cys24 is the site of N-palmitoyl cysteine attachment. A lipid anchor (S-diacylglycerol cysteine) is attached at Cys24. Positions 192-272 (VTRNRIKKVT…EAVVRVGTKP (81 aa)) constitute a G5 domain. Residues Cys291 and Cys355 are joined by a disulfide bond.

The protein belongs to the transglycosylase family. Rpf subfamily.

Its subcellular location is the cell membrane. Factor that stimulates resuscitation of dormant cells. Has peptidoglycan (PG) hydrolytic activity. Active in the pM concentration range. Has little to no effect on actively-growing cells. PG fragments could either directly activate the resuscitation pathway of dormant bacteria or serve as a substrate for endogenous Rpf, resulting in low molecular weight products with resuscitation activity. Plays a role in reactivating bacteria from chronic tuberculosis (TB) in mice. In Mycobacterium tuberculosis (strain ATCC 35801 / TMC 107 / Erdman), this protein is Resuscitation-promoting factor RpfB (rpfB).